The following is a 259-amino-acid chain: MMSFVISDEFLGTFVPILVYWVYSGMYICLGSLDKYRLHSKIDEDEKNLVSKSAVVKGVLLQQTLQAIISVILFKITGSDADAATTQQFSILLLARQFIIAMLVIDTWQYFIHRYMHLNKFLYKHIHSQHHRLIVPYSYGALYNHPLEGLLLDTIGGALSFLFSGMSPRTAIFFFSFATIKTVDDHCGLWLPGNPFHIFFSNNSAYHDVHHQLYGTKYNFSQPFFVMWDRILGTYLPYSLEKRANGGFETRPIKVSKDE.

Transmembrane regions (helical) follow at residues phenylalanine 10–leucine 30, alanine 54–phenylalanine 74, and isoleucine 91–phenylalanine 111. One can recognise a Fatty acid hydroxylase domain in the interval phenylalanine 98 to threonine 234. Residues histidine 113–histidine 117 carry the Histidine box-1 motif. A Histidine box-2 motif is present at residues histidine 127–histidine 131. Residues tyrosine 206–glutamine 212 carry the Histidine box-3 motif.

This sequence belongs to the sterol desaturase family. It depends on Fe cation as a cofactor. In terms of tissue distribution, ubiquitous, with higher levels in flowers and roots.

It is found in the endoplasmic reticulum membrane. It carries out the reaction a dihydroceramide + 2 Fe(II)-[cytochrome b5] + O2 + 2 H(+) = a phytoceramide + 2 Fe(III)-[cytochrome b5] + H2O. The protein operates within membrane lipid metabolism; sphingolipid biosynthesis. Functionally, involved in sphingolipid trihydroxy long-chain base (4-hydroxysphinganine) biosynthesis. Can use C18- and C20-sphinganine as substrates to produce C18- and C20-phytosphinganines (D-ribo-2-amino-1,3,4-trihydroxyoctadecane and -eicosane). In Arabidopsis thaliana (Mouse-ear cress), this protein is Sphinganine C4-monooxygenase 2 (SBH2).